The primary structure comprises 99 residues: MSITGQPHVYKKDTIIRLKPLSLNSNNRSYVLVPQKGNIQNIINHLNNLNEIVGRSLLGIWKINSYFGLSKDPSESKSKNPSVFNTAKTIFKSGGVDYS.

It belongs to the caulimoviridae ORF II family.

Its function is as follows. This protein is involved in virus transmission. In Cauliflower mosaic virus (strain W260) (CaMV), this protein is Aphid transmission protein.